The primary structure comprises 255 residues: Proteasome subunit alpha type-3 (255 aa).

Serine 2 bears the N-acetylserine mark. Residues lysine 57, lysine 206, and lysine 230 each carry the N6-acetyllysine modification. Residues serine 243 and serine 250 each carry the phosphoserine modification.

The protein belongs to the peptidase T1A family. The 26S proteasome consists of a 20S proteasome core and two 19S regulatory subunits. The 20S proteasome core is a barrel-shaped complex made of 28 subunits that are arranged in four stacked rings. The two outer rings are each formed by seven alpha subunits, and the two inner rings are formed by seven beta subunits. The proteolytic activity is exerted by three beta-subunits PSMB5, PSMB6 and PSMB7. Interacts with AURKB. Interacts with CDKN1A. Interacts with MDM2 and RB1. Interacts with the C-terminus of TBXA2R isoform 2. Interacts with DNAJB2. As to quaternary structure, (Microbial infection) Interacts with HIV-1 Tat protein. In terms of assembly, (Microbial infection) Interacts with hepatitis C virus (HCV) F protein. (Microbial infection) Interacts with Epstein-Barr virus EBNA3 proteins.

Its subcellular location is the cytoplasm. It localises to the nucleus. Its function is as follows. Component of the 20S core proteasome complex involved in the proteolytic degradation of most intracellular proteins. This complex plays numerous essential roles within the cell by associating with different regulatory particles. Associated with two 19S regulatory particles, forms the 26S proteasome and thus participates in the ATP-dependent degradation of ubiquitinated proteins. The 26S proteasome plays a key role in the maintenance of protein homeostasis by removing misfolded or damaged proteins that could impair cellular functions, and by removing proteins whose functions are no longer required. Associated with the PA200 or PA28, the 20S proteasome mediates ubiquitin-independent protein degradation. This type of proteolysis is required in several pathways including spermatogenesis (20S-PA200 complex) or generation of a subset of MHC class I-presented antigenic peptides (20S-PA28 complex). Binds to the C-terminus of CDKN1A and thereby mediates its degradation. Negatively regulates the membrane trafficking of the cell-surface thromboxane A2 receptor (TBXA2R) isoform 2. This Homo sapiens (Human) protein is Proteasome subunit alpha type-3.